The following is a 445-amino-acid chain: Trigger factor (445 aa).

Residues 162-247 enclose the PPIase FKBP-type domain; sequence GDQVTIDAIG…IKAVHTAEPT (86 aa).

It belongs to the FKBP-type PPIase family. Tig subfamily.

Its subcellular location is the cytoplasm. The enzyme catalyses [protein]-peptidylproline (omega=180) = [protein]-peptidylproline (omega=0). Functionally, involved in protein export. Acts as a chaperone by maintaining the newly synthesized protein in an open conformation. Functions as a peptidyl-prolyl cis-trans isomerase. The polypeptide is Trigger factor (Rickettsia conorii (strain ATCC VR-613 / Malish 7)).